Here is a 364-residue protein sequence, read N- to C-terminus: 3-methyl-2-oxobutanoate hydroxymethyltransferase 1, mitochondrial (364 aa).

Residues 1 to 59 (MMMMMRRAFRHLARQQRRPLSHVPESAVYGGPRPQDVGAAAGAGAGAGATRRVTVTTLR) constitute a mitochondrion transit peptide. 2 residues coordinate Mg(2+): Asp94 and Asp133. Residues 94–95 (DS), Asp133, and Lys163 each bind 3-methyl-2-oxobutanoate. Glu165 contacts Mg(2+). Glu233 functions as the Proton acceptor in the catalytic mechanism.

The protein belongs to the PanB family. The cofactor is Mg(2+).

Its subcellular location is the mitochondrion. The enzyme catalyses 3-methyl-2-oxobutanoate + (6R)-5,10-methylene-5,6,7,8-tetrahydrofolate + H2O = 2-dehydropantoate + (6S)-5,6,7,8-tetrahydrofolate. It functions in the pathway cofactor biosynthesis; (R)-pantothenate biosynthesis; (R)-pantoate from 3-methyl-2-oxobutanoate: step 1/2. In terms of biological role, catalyzes the reversible reaction in which hydroxymethyl group from 5,10-methylenetetrahydrofolate is transferred onto alpha-ketoisovalerate to form ketopantoate. In Oryza sativa subsp. japonica (Rice), this protein is 3-methyl-2-oxobutanoate hydroxymethyltransferase 1, mitochondrial (KPHMT1).